A 378-amino-acid chain; its full sequence is Beta sliding clamp (378 aa).

Belongs to the beta sliding clamp family. As to quaternary structure, forms a ring-shaped head-to-tail homodimer around DNA which binds and tethers DNA polymerases and other proteins to the DNA. The DNA replisome complex has a single clamp-loading complex (3 tau and 1 each of delta, delta', psi and chi subunits) which binds 3 Pol III cores (1 core on the leading strand and 2 on the lagging strand) each with a beta sliding clamp dimer. Additional proteins in the replisome are other copies of gamma, psi and chi, Ssb, DNA helicase and RNA primase.

It is found in the cytoplasm. Confers DNA tethering and processivity to DNA polymerases and other proteins. Acts as a clamp, forming a ring around DNA (a reaction catalyzed by the clamp-loading complex) which diffuses in an ATP-independent manner freely and bidirectionally along dsDNA. Initially characterized for its ability to contact the catalytic subunit of DNA polymerase III (Pol III), a complex, multichain enzyme responsible for most of the replicative synthesis in bacteria; Pol III exhibits 3'-5' exonuclease proofreading activity. The beta chain is required for initiation of replication as well as for processivity of DNA replication. This is Beta sliding clamp (dnaN) from Streptococcus pneumoniae (strain ATCC BAA-255 / R6).